A 232-amino-acid polypeptide reads, in one-letter code: UPF0758 protein FN0909 (232 aa).

Residues 110 to 232 (KISNKDILLK…YFSFLEEGLI (123 aa)) enclose the MPN domain. Residues H181, H183, and D194 each contribute to the Zn(2+) site. A JAMM motif motif is present at residues 181-194 (HNHPSDNITPSKSD).

It belongs to the UPF0758 family.

The sequence is that of UPF0758 protein FN0909 from Fusobacterium nucleatum subsp. nucleatum (strain ATCC 25586 / DSM 15643 / BCRC 10681 / CIP 101130 / JCM 8532 / KCTC 2640 / LMG 13131 / VPI 4355).